Here is a 177-residue protein sequence, read N- to C-terminus: Protein LIGHT-DEPENDENT SHORT HYPOCOTYLS 10 (177 aa).

The span at 1-10 (MSSPRERGKS) shows a compositional bias: basic and acidic residues. Disordered stretches follow at residues 1 to 31 (MSSPRERGKSLMESSGSEPPVTPSRYESQKR) and 144 to 177 (RGIPYKKKKKKKPTPEMGGGREDSSSSSSSFSFS). In terms of domain architecture, ALOG spans 25 to 152 (RYESQKRRDW…ARGIPYKKKK (128 aa)). Positions 150–154 (KKKKK) match the Nuclear localization signal motif. The span at 168-177 (SSSSSSFSFS) shows a compositional bias: low complexity.

This sequence belongs to the plant homeotic and developmental regulators ALOG protein family.

It localises to the nucleus. Functionally, probable transcription regulator that acts as a developmental regulator by promoting cell growth in response to light. The chain is Protein LIGHT-DEPENDENT SHORT HYPOCOTYLS 10 (LSH10) from Arabidopsis thaliana (Mouse-ear cress).